Here is a 454-residue protein sequence, read N- to C-terminus: Golgi reassembly-stacking protein 2 (454 aa).

Gly2 carries N-myristoyl glycine lipidation. PDZ GRASP-type domains follow at residues Glu15–Phe105 and Asn111–Leu199. Residues Glu15–Leu215 form a GRASP region. Residues Arg30 and Arg47 each carry the dimethylated arginine modification. An important for membrane binding region spans residues Ile194 to Leu199. Position 214 is a phosphoserine (Ser214). Thr222 carries the post-translational modification Phosphothreonine. Phosphothreonine; by MAPK is present on Thr225. The segment at Glu377–Ser454 is disordered. The residue at position 411 (Ser411) is a Phosphoserine. At Thr435 the chain carries Phosphothreonine. A phosphoserine mark is found at Ser443 and Ser451.

The protein belongs to the GORASP family. As to quaternary structure, homodimer. Homooligomer. ER stress induces phosphorylation-dependent monomerization. Interacts with BLZF1/Golgin 45. Identified in a complex with RAB2 and GORASP2. Interacts with JAM2 and JAM3. Interacts with members of the p24 cargo receptors. Interacts with CNIH1 and the cytoplasmic domain of transmembrane TGFA, prior its transit in the trans-Golgi. Interacts with KCTD5. Interacts with TMED2 and TMED3. Interacts with SEC16A in response to ER stress. Interacts (via PDZ GRASP-type 1 domain) with core-glycosylated CFTR in response to ER stress. Post-translationally, myristoylated. Myristoylation is essential for the Golgi targeting. In terms of processing, palmitoylated. Phosphorylated in mitotic cells. ER stress-induced phosphorylation at Ser-443 induces monomerization and subsequent relocalization from Golgi to ER which is essential for mediating unconventional (ER/Golgi-independent) trafficking of CFTR to the cell membrane. In terms of tissue distribution, detected in lung, brain, heart, liver and testis.

The protein localises to the golgi apparatus membrane. Its subcellular location is the endoplasmic reticulum membrane. The protein resides in the golgi apparatus. Functionally, key structural protein of the Golgi apparatus. The membrane cisternae of the Golgi apparatus adhere to each other to form stacks, which are aligned side by side to form the Golgi ribbon. Acting in concert with GORASP1/GRASP65, is required for the formation and maintenance of the Golgi ribbon, and may be dispensable for the formation of stacks. However, other studies suggest that GORASP2 plays a role in the assembly and membrane stacking of the Golgi cisternae, and in the process by which Golgi stacks reform after breakdown during mitosis and meiosis. May regulate the intracellular transport and presentation of a defined set of transmembrane proteins, such as transmembrane TGFA. Required for normal acrosome formation during spermiogenesis and normal male fertility, probably by promoting colocalization of JAM2 and JAM3 at contact sites between germ cells and Sertoli cells. Mediates ER stress-induced unconventional (ER/Golgi-independent) trafficking of core-glycosylated CFTR to cell membrane. This chain is Golgi reassembly-stacking protein 2 (Gorasp2), found in Rattus norvegicus (Rat).